The primary structure comprises 275 residues: 2,3,4,5-tetrahydropyridine-2,6-dicarboxylate N-succinyltransferase (275 aa).

2 residues coordinate substrate: R104 and D141.

It belongs to the transferase hexapeptide repeat family. In terms of assembly, homotrimer.

The protein localises to the cytoplasm. The enzyme catalyses (S)-2,3,4,5-tetrahydrodipicolinate + succinyl-CoA + H2O = (S)-2-succinylamino-6-oxoheptanedioate + CoA. Its pathway is amino-acid biosynthesis; L-lysine biosynthesis via DAP pathway; LL-2,6-diaminopimelate from (S)-tetrahydrodipicolinate (succinylase route): step 1/3. In Mannheimia succiniciproducens (strain KCTC 0769BP / MBEL55E), this protein is 2,3,4,5-tetrahydropyridine-2,6-dicarboxylate N-succinyltransferase.